Reading from the N-terminus, the 942-residue chain is AP-1 complex subunit beta (942 aa).

6 HEAT repeats span residues 45 to 82, 117 to 154, 156 to 193, 273 to 313, 384 to 421, and 458 to 495; these read KDVSMLFTHVLNCMQTHNLELKKLVYLYVMNYAKNHPD, NITEHLCEPLRHALKDQDPYVRKTAAVCVAKLYDVNPE, VENQGFLNILNDLLGDSNPMVVANAVASLTEIDEVSKK, DVIR…KRPE, RASERCIQVLLDLIQTKVNYVVQEAIIVIKDIFRKYPN, and DNAHELLNSFLEGFKDENSQVQLQLLTSIVKLFLKRPK. The tract at residues 590-700 is disordered; sequence GLRNKEEEDE…NDLSFLGGGG (111 aa). The segment covering 596–609 has biased composition (acidic residues); sequence EEDEEEPDYVDDDN. Low complexity-rich tracts occupy residues 613-645 and 664-677; these read QQGGQQQQGGYQQQQQQQQQGGYQQQQPQQQQP and NNNNNNYGNNNNNN. Residues 678-693 are compositionally biased toward polar residues; that stretch reads MYSPQPQQFNGNSNDL.

This sequence belongs to the adaptor complexes large subunit family. As to quaternary structure, adaptor protein complex 1 (AP-1) is a heterotetramer composed of two large adaptins (gamma-type subunit and beta-type subunit), a medium adaptin (mu-type subunit) and a small adaptin (sigma-type subunit).

It is found in the golgi apparatus. It localises to the trans-Golgi network. Its subcellular location is the cytoplasmic vesicle. The protein resides in the clathrin-coated vesicle membrane. Functionally, subunit of clathrin-associated adaptor protein complex 1 that plays a role in protein sorting in the trans-Golgi network (TGN) and endosomes. The AP complexes mediate the recruitment of clathrin to membranes and the recognition of sorting signals within the cytosolic tails of transmembrane cargo molecules. Also involved in early steps of phagocytosis and macropinocytosis. In Dictyostelium discoideum (Social amoeba), this protein is AP-1 complex subunit beta (ap1b1).